Reading from the N-terminus, the 638-residue chain is Chaperone protein DnaK (638 aa).

Residue threonine 198 is modified to Phosphothreonine; by autocatalysis. Residues 600 to 638 form a disordered region; that stretch reads KTQTEGGAQPGAEADGDTGAKGGEKVVDADFEEVKDDKK. Residues 628–638 show a composition bias toward acidic residues; that stretch reads ADFEEVKDDKK.

It belongs to the heat shock protein 70 family.

Functionally, acts as a chaperone. In Geobacter metallireducens (strain ATCC 53774 / DSM 7210 / GS-15), this protein is Chaperone protein DnaK.